The following is a 153-amino-acid chain: Transcriptional repressor NrdR (153 aa).

A zinc finger spans residues 3–34 (CPFCGYEDTRVLDSRELSEGRAIRRRRECPQC). Positions 49–139 (ITVIKKDGRR…VYKDFREIDQ (91 aa)) constitute an ATP-cone domain.

The protein belongs to the NrdR family. Requires Zn(2+) as cofactor.

In terms of biological role, negatively regulates transcription of bacterial ribonucleotide reductase nrd genes and operons by binding to NrdR-boxes. In Fervidobacterium nodosum (strain ATCC 35602 / DSM 5306 / Rt17-B1), this protein is Transcriptional repressor NrdR.